The sequence spans 80 residues: Large ribosomal subunit protein uL24 (80 aa).

It belongs to the universal ribosomal protein uL24 family. Part of the 50S ribosomal subunit.

Functionally, one of two assembly initiator proteins, it binds directly to the 5'-end of the 23S rRNA, where it nucleates assembly of the 50S subunit. In terms of biological role, one of the proteins that surrounds the polypeptide exit tunnel on the outside of the subunit. In Chlorobium phaeobacteroides (strain DSM 266 / SMG 266 / 2430), this protein is Large ribosomal subunit protein uL24.